Here is a 154-residue protein sequence, read N- to C-terminus: Ribosome maturation factor RimP (154 aa).

The protein belongs to the RimP family.

The protein localises to the cytoplasm. In terms of biological role, required for maturation of 30S ribosomal subunits. The sequence is that of Ribosome maturation factor RimP from Clostridium novyi (strain NT).